The primary structure comprises 1323 residues: Sister chromatid cohesion protein PDS5 homolog A-A (1323 aa).

An HEAT repeat occupies 385–421; that stretch reads FLVNDQLLGFVRERTLDKRWRVRKEAMMGLAQLYKKY. The tract at residues 1139–1323 is disordered; that stretch reads LNATGRRPYS…TAQRQIDLHR (185 aa). Residues 1153–1165 are compositionally biased toward low complexity; it reads SEISNNVSINSES. Polar residues-rich tracts occupy residues 1166 to 1176 and 1210 to 1220; these read DASVANRQSSE and LDQTAPSNTGT. The segment covering 1235–1246 has biased composition (basic and acidic residues); that stretch reads NIRKESEEKKAD.

In terms of assembly, interacts with the cohesin complex. Binds chromatin in a cohesin-dependent manner.

The protein resides in the nucleus. Its function is as follows. May regulate sister chromatid cohesion during mitosis and couple it to DNA replication. This is Sister chromatid cohesion protein PDS5 homolog A-A (pds5a-a) from Xenopus laevis (African clawed frog).